Reading from the N-terminus, the 270-residue chain is Probable ribosomal RNA small subunit methyltransferase A (270 aa).

Residues H19, L21, G46, E67, D92, and N107 each coordinate S-adenosyl-L-methionine.

This sequence belongs to the class I-like SAM-binding methyltransferase superfamily. rRNA adenine N(6)-methyltransferase family. RsmA subfamily.

The protein localises to the cytoplasm. In terms of biological role, specifically dimethylates two adjacent adenosines in the loop of a conserved hairpin near the 3'-end of 16S rRNA in the 30S particle. May play a critical role in biogenesis of 30S subunits. This is Probable ribosomal RNA small subunit methyltransferase A from Methanococcoides burtonii (strain DSM 6242 / NBRC 107633 / OCM 468 / ACE-M).